Here is a 502-residue protein sequence, read N- to C-terminus: Sodium/proline symporter (502 aa).

13 helical membrane-spanning segments follow: residues 6-26 (PMLVTFCVYIFGMILIGFIAW), 42-62 (LGPFVTALSAGASDMSGWLLM), 68-88 (IFLSGISESWIAIGLTLGAWI), 127-147 (IISALVILLFFTIYCASGIVA), 163-183 (ALWAGAAATIIYTFIGGFLAV), 192-212 (SLMIFALILTPVMVIVGVGGF), 235-255 (FVAIISLMGWGLGYFGQPHIL), 276-296 (TWMILCLAGAVAVGFFGIAYF), 320-340 (ILFNPWIAGVLLSAILAAVMS), 371-391 (LVWVGRVMVLVVALIAIALAA), 398-418 (LGLVSYAWAGFGAAFGPVVLF), 430-450 (ALAGMIIGAVTVIVWKQYGWL), and 452-472 (LYEIIPGFIFGSLGIVIFSLL).

It belongs to the sodium:solute symporter (SSF) (TC 2.A.21) family.

The protein localises to the cell inner membrane. It catalyses the reaction L-proline(in) + Na(+)(in) = L-proline(out) + Na(+)(out). In terms of biological role, catalyzes the sodium-dependent uptake of extracellular L-proline. This Salmonella typhimurium (strain LT2 / SGSC1412 / ATCC 700720) protein is Sodium/proline symporter.